Reading from the N-terminus, the 291-residue chain is MQENLLEKQFLNHPLYTKIQELKALNLACNFSLDDSVNLSTNSQAKDEILAITKELKPWRKGPFKIDDLFIDTEWQSFIKFNILKPFMNEISQKCVADIGCNNGYYMFKMLEFNPAKLIGFDPSIKYRLQFELINALAKTPIEYELLGVEDLPRYGLKFDVIFCLGVIYHRSDPIKMLKDLKAGLNKNGVVFLDTMYIEDEREIALVPNKTYSKIPNIYFVPSISALKNWCERAGFKEFEVLATKKTDENEQRKTEWIDSFSLENFLDPKDKNLTIEGYEAPKRVYVRIGI.

Carboxy-S-adenosyl-L-methionine is bound by residues Lys61, Trp75, Lys80, Gly100, 122-124 (DPS), 149-150 (VE), Tyr169, and Arg284.

Belongs to the class I-like SAM-binding methyltransferase superfamily. CmoB family. In terms of assembly, homotetramer.

The enzyme catalyses carboxy-S-adenosyl-L-methionine + 5-hydroxyuridine(34) in tRNA = 5-carboxymethoxyuridine(34) in tRNA + S-adenosyl-L-homocysteine + H(+). Catalyzes carboxymethyl transfer from carboxy-S-adenosyl-L-methionine (Cx-SAM) to 5-hydroxyuridine (ho5U) to form 5-carboxymethoxyuridine (cmo5U) at position 34 in tRNAs. The polypeptide is tRNA U34 carboxymethyltransferase (Campylobacter jejuni subsp. jejuni serotype O:6 (strain 81116 / NCTC 11828)).